The primary structure comprises 828 residues: Periplasmic nitrate reductase (828 aa).

The tat-type signal signal peptide spans 1-31 (MKLSRRSFMKANAVAAVAAAAGLSVPGVARA). Positions 39–95 (IKWDKAPCRFCGTGCGVLVGTQQGRVVACQGDPDAPVNRGLNCIKGYFLPKIMYGKD) constitute a 4Fe-4S Mo/W bis-MGD-type domain. [4Fe-4S] cluster-binding residues include Cys-46, Cys-49, Cys-53, and Cys-81. Mo-bis(molybdopterin guanine dinucleotide) is bound by residues Lys-83, Gln-150, Asn-175, Cys-179, 212–219 (WGANMAEM), 243–247 (STYQH), 262–264 (QSD), Met-372, Gln-376, Asn-482, 508–509 (SD), Lys-531, Asp-558, and 718–727 (TGRVLEHWHT). Residue Phe-794 participates in substrate binding. Residues Asn-802 and Lys-819 each coordinate Mo-bis(molybdopterin guanine dinucleotide).

It belongs to the prokaryotic molybdopterin-containing oxidoreductase family. NasA/NapA/NarB subfamily. In terms of assembly, component of the periplasmic nitrate reductase NapAB complex composed of NapA and NapB. [4Fe-4S] cluster is required as a cofactor. It depends on Mo-bis(molybdopterin guanine dinucleotide) as a cofactor. In terms of processing, predicted to be exported by the Tat system. The position of the signal peptide cleavage has not been experimentally proven.

It localises to the periplasm. It carries out the reaction 2 Fe(II)-[cytochrome] + nitrate + 2 H(+) = 2 Fe(III)-[cytochrome] + nitrite + H2O. Its function is as follows. Catalytic subunit of the periplasmic nitrate reductase complex NapAB. Receives electrons from NapB and catalyzes the reduction of nitrate to nitrite. In Shigella boydii serotype 4 (strain Sb227), this protein is Periplasmic nitrate reductase.